A 346-amino-acid chain; its full sequence is uncharacterized protein (346 aa).

His65 is a binding site for Zn(2+). Asp67 is a catalytic residue. Zn(2+) is bound at residue Asp89. Glu115 acts as the Proton acceptor in catalysis. Positions 116, 145, and 319 each coordinate Zn(2+).

The protein belongs to the peptidase M20A family. Zn(2+) serves as cofactor. The cofactor is Co(2+).

This is an uncharacterized protein from Methanocaldococcus jannaschii (strain ATCC 43067 / DSM 2661 / JAL-1 / JCM 10045 / NBRC 100440) (Methanococcus jannaschii).